We begin with the raw amino-acid sequence, 271 residues long: Neurexophilin-1 (271 aa).

A signal peptide spans 1 to 21 (MQAACWYVLLLLQPTVYLVTC). An II region spans residues 22–97 (ANLTNGGKSE…WDWLRNSTDL (76 aa)). N-linked (GlcNAc...) asparagine glycosylation is found at Asn-23, Asn-68, Asn-93, Asn-146, Asn-156, and Asn-162. Residues 98-176 (QEPRPRAKRR…LVPPTKIVEF (79 aa)) are III. The segment at 177–185 (DLAQQTVID) is IV (linker domain). The tract at residues 186–271 (AKDSKSFNCR…HSDTPYFPSG (86 aa)) is v (Cys-rich).

The protein belongs to the neurexophilin family. Post-translationally, may be proteolytically processed at the boundary between the N-terminal non-conserved and the central conserved domain in neuron-like cells.

Its subcellular location is the secreted. In terms of biological role, may be signaling molecules that resemble neuropeptides. Ligand for alpha-neurexins. This chain is Neurexophilin-1 (NXPH1), found in Bos taurus (Bovine).